The sequence spans 208 residues: Uracil phosphoribosyltransferase (208 aa).

5-phospho-alpha-D-ribose 1-diphosphate contacts are provided by residues R78, R103, and 130–138 (DPMLATGGS). Uracil is bound by residues I193 and 198–200 (GDA). 5-phospho-alpha-D-ribose 1-diphosphate is bound at residue D199.

The protein belongs to the UPRTase family. Mg(2+) is required as a cofactor.

It catalyses the reaction UMP + diphosphate = 5-phospho-alpha-D-ribose 1-diphosphate + uracil. The protein operates within pyrimidine metabolism; UMP biosynthesis via salvage pathway; UMP from uracil: step 1/1. With respect to regulation, allosterically activated by GTP. In terms of biological role, catalyzes the conversion of uracil and 5-phospho-alpha-D-ribose 1-diphosphate (PRPP) to UMP and diphosphate. In Colwellia psychrerythraea (strain 34H / ATCC BAA-681) (Vibrio psychroerythus), this protein is Uracil phosphoribosyltransferase.